A 1004-amino-acid chain; its full sequence is Glycine dehydrogenase (decarboxylating), mitochondrial (1004 aa).

N6-(pyridoxal phosphate)lysine is present on Lys-738.

Belongs to the GcvP family. As to quaternary structure, homodimer. Interacts with GCSH. The glycine cleavage system is composed of four proteins: P (GLDC), T (GCST), L (DLD) and H (GCSH). Pyridoxal 5'-phosphate serves as cofactor. As to expression, liver (at protein level).

The protein localises to the mitochondrion. The catalysed reaction is N(6)-[(R)-lipoyl]-L-lysyl-[glycine-cleavage complex H protein] + glycine + H(+) = N(6)-[(R)-S(8)-aminomethyldihydrolipoyl]-L-lysyl-[glycine-cleavage complex H protein] + CO2. With respect to regulation, stimulated by lipoic acid. Inhibited in presence of methylamine. Functionally, the glycine cleavage system catalyzes the degradation of glycine. The P protein (GLDC) binds the alpha-amino group of glycine through its pyridoxal phosphate cofactor; CO(2) is released and the remaining methylamine moiety is then transferred to the lipoamide cofactor of the H protein (GCSH). This chain is Glycine dehydrogenase (decarboxylating), mitochondrial, found in Gallus gallus (Chicken).